A 244-amino-acid chain; its full sequence is MGLSQLGLWLRRLWVLFQVALQVAVGKVFLILFPSRVKQHIVAMNRKNPHFSYDNWAPTLYSVQYFWFVLKVRWQRLEDRTEPGGLAPNCPVVRLSGQRCSIWDFMKGNRPLVLNFGSCTUPSFLFKFDQFKRLIEDFCSIADFLIIYIEEAHASDGWAFKNNVNIRNHRNLQDRLQAACLLLDRSPRCPVVVDTMKNQSSRLYAALPERLYVLQAGRILYKGKPGPWNYHPEEVRAVLEKLHS.

Residues 1 to 12 (MGLSQLGLWLRR) are Extracellular-facing. A helical; Signal-anchor for type III membrane protein transmembrane segment spans residues 13-33 (LWVLFQVALQVAVGKVFLILF). The Cytoplasmic segment spans residues 34-244 (PSRVKQHIVA…VRAVLEKLHS (211 aa)). U121 is a catalytic residue. Position 121 (U121) is a non-standard amino acid, selenocysteine.

It belongs to the iodothyronine deiodinase family. As to quaternary structure, predominantly monomer. Can form homodimers but homodimerization is not essential for enzyme activity.

Its subcellular location is the cell membrane. The protein localises to the endoplasmic reticulum membrane. It is found in the basolateral cell membrane. The enzyme catalyses 3,3',5-triiodo-L-thyronine + iodide + A + H(+) = L-thyroxine + AH2. The catalysed reaction is 3,3',5'-triiodo-L-thyronine + iodide + A + H(+) = L-thyroxine + AH2. It catalyses the reaction 3,3'-diiodo-L-thyronine + iodide + A + H(+) = 3,3',5'-triiodo-L-thyronine + AH2. It carries out the reaction 3,3'-diiodo-L-thyronine + iodide + A + H(+) = 3,3',5-triiodo-L-thyronine + AH2. The enzyme catalyses 3'-iodo-L-thyronine + iodide + A + H(+) = 3',5'-diiodo-L-thyronine + AH2. The catalysed reaction is 3-iodo-L-thyronine + iodide + A + H(+) = 3,5-diiodo-L-thyronine + AH2. It catalyses the reaction 3-iodo-L-thyronine + iodide + A + H(+) = 3,3'-diiodo-L-thyronine + AH2. It carries out the reaction 3,3'-diiodothyronamine + iodide + A + H(+) = 3,3',5'-triiodothyronamine + AH2. The enzyme catalyses 3'-iodothyronamine + iodide + A + H(+) = 3',5'-diiodothyronamine + AH2. The catalysed reaction is 3-iodothyronamine + iodide + A + H(+) = 3,3'-diiodothyronamine + AH2. It catalyses the reaction 3,3'-diiodothyronamine + iodide + A + H(+) = 3,3',5-triiodothyronamine + AH2. It carries out the reaction 3-iodothyronamine + iodide + A + H(+) = 3,5-diiodothyronamine + AH2. The enzyme catalyses 3,3'-diiodo-L-thyronine sulfate + iodide + A + H(+) = 3,3',5'-triiodo-L-thyronine sulfate + AH2. The catalysed reaction is 3,3',5'-triiodo-L-thyronine sulfate + iodide + A + H(+) = L-thyroxine sulfate + AH2. It catalyses the reaction 3,3'-diiodo-L-thyronine sulfate + iodide + A + H(+) = 3,3',5-triiodo-L-thyronine sulfate + AH2. Functionally, plays a crucial role in the metabolism of thyroid hormones (TH) and has specific roles in TH activation and inactivation by deiodination. Catalyzes the deiodination of L-thyroxine (T4) to 3,5,3'-triiodothyronine (T3) and 3',5'-diiodothyronine (3',5'-T2) to 3'-monoiodothyronine (3'-T1) via outer-ring deiodination (ORD). Catalyzes the deiodination of T4 to 3,3',5'-triiodothyronine (rT3), T3 to 3,3'-diiodothyronine (3,3'-T2), 3,5-diiodothyronine (3,5-T2) to 3-monoiodothyronine (3-T1) and 3,3'-T2 to 3-T1 via inner-ring deiodination (IRD). Catalyzes the deiodination of rT3 to 3,3'-T2 via ORD. Catalyzes the phenolic ring deiodinations of 3,3',5'-triiodothyronamine, 3',5'-diiodothyronamine and 3,3'-diiodothyronamine as well as tyrosyl ring deiodinations of 3,5,3'-triiodothyronamine and 3,5-diiodothyronamine. Catalyzes the deiodination of L-thyroxine sulfate and 3,3',5-triiodo-L-thyronine sulfate via IRD and of 3,3',5'-triiodo-L-thyronine sulfate via ORD. The protein is Type I iodothyronine deiodinase (DIO1) of Felis catus (Cat).